We begin with the raw amino-acid sequence, 465 residues long: Lactaldehyde dehydrogenase (465 aa).

220 to 225 provides a ligand contact to NAD(+); the sequence is GSVEVG. Residues Glu240 and Cys274 contribute to the active site.

This sequence belongs to the aldehyde dehydrogenase family. As to quaternary structure, homotetramer.

It carries out the reaction (S)-lactaldehyde + NAD(+) + H2O = (S)-lactate + NADH + 2 H(+). The protein operates within cofactor biosynthesis; coenzyme F420 biosynthesis. Its function is as follows. Involved in F420 biosynthesis through the oxidation of lactaldehyde to lactate. This Methanococcus maripaludis (strain DSM 14266 / JCM 13030 / NBRC 101832 / S2 / LL) protein is Lactaldehyde dehydrogenase.